We begin with the raw amino-acid sequence, 275 residues long: Large ribosomal subunit protein uL2 (275 aa).

The segment at 223 to 275 is disordered; that stretch reads VAMNPVDHPHGGGEGRTSGGRHPVSPWGQPTKGYKTRSNKRTDKYIVRRRNKK.

Belongs to the universal ribosomal protein uL2 family. As to quaternary structure, part of the 50S ribosomal subunit. Forms a bridge to the 30S subunit in the 70S ribosome.

One of the primary rRNA binding proteins. Required for association of the 30S and 50S subunits to form the 70S ribosome, for tRNA binding and peptide bond formation. It has been suggested to have peptidyltransferase activity; this is somewhat controversial. Makes several contacts with the 16S rRNA in the 70S ribosome. The sequence is that of Large ribosomal subunit protein uL2 from Shewanella pealeana (strain ATCC 700345 / ANG-SQ1).